Consider the following 294-residue polypeptide: Nucleotide-binding protein Adeh_0147 (294 aa).

17 to 24 (GVSGSGKS) contacts ATP. GTP is bound at residue 68–71 (DARE).

This sequence belongs to the RapZ-like family.

In terms of biological role, displays ATPase and GTPase activities. The protein is Nucleotide-binding protein Adeh_0147 of Anaeromyxobacter dehalogenans (strain 2CP-C).